Consider the following 119-residue polypeptide: Ribonuclease P protein component (119 aa).

It belongs to the RnpA family. As to quaternary structure, consists of a catalytic RNA component (M1 or rnpB) and a protein subunit.

The enzyme catalyses Endonucleolytic cleavage of RNA, removing 5'-extranucleotides from tRNA precursor.. RNaseP catalyzes the removal of the 5'-leader sequence from pre-tRNA to produce the mature 5'-terminus. It can also cleave other RNA substrates such as 4.5S RNA. The protein component plays an auxiliary but essential role in vivo by binding to the 5'-leader sequence and broadening the substrate specificity of the ribozyme. This is Ribonuclease P protein component from Streptococcus pyogenes serotype M12 (strain MGAS2096).